The following is a 707-amino-acid chain: Probable potassium transporter 17 (707 aa).

Positions 1 to 25 (MDLEAGSIRPRSDGEGGGPAAGRET) are disordered. Over 1–34 (MDLEAGSIRPRSDGEGGGPAAGRETDDSNVWKDL) the chain is Cytoplasmic. Residues 35–55 (FLAYKTLGVVFGGLVTSPLYV) traverse the membrane as a helical segment. At 56 to 71 (YPSMNLSSPTEADYLG) the chain is on the extracellular side. N-linked (GlcNAc...) asparagine glycosylation occurs at asparagine 60. A helical membrane pass occupies residues 72–92 (IYSIMFWTLTLIGVVKYVCIA). The Cytoplasmic portion of the chain corresponds to 93-157 (LNADDHGEGG…FFEQSITARR (65 aa)). Residues 158–178 (VLLFVAVLGMCMLIGDGILTP) form a helical membrane-spanning segment. The Extracellular segment spans residues 179–194 (AISVLSAIDGIRGPFP). Residues 195–215 (TVSKPVVEALSAAILIGLFLL) traverse the membrane as a helical segment. The Cytoplasmic portion of the chain corresponds to 216 to 222 (QKYGTSK). A helical transmembrane segment spans residues 223–243 (VSFLFSPIMAAWTFTTPIIGL). Over 244-276 (YSIVHYYPGIFKAISPYYIVHFFLRNKRQGWQL) the chain is Extracellular. Residues 277 to 297 (LGGTVLCITGAEAMFADLGHF) form a helical membrane-spanning segment. Residues 298-305 (SKKAIQIA) are Cytoplasmic-facing. A helical membrane pass occupies residues 306–326 (FLSSIYPSLVLTYAGQTAYLI). At 327–343 (NNVNDFGDGFYKFVPRP) the chain is on the extracellular side. The helical transmembrane segment at 344 to 364 (VYWPMFVVATLAAIVASQSLI) threads the bilayer. The Cytoplasmic segment spans residues 365–402 (SATFSVIKQSVVLDYFPRVKVVHTSQHKEGEVYSPEIN). A helical membrane pass occupies residues 403–423 (YILMVLCVGVILGFGGGKAIG). The Extracellular portion of the chain corresponds to 424–427 (NAFG). Residues 428–448 (VVVIMVMLITTVLLTLVMIII) form a helical membrane-spanning segment. Residues 449–454 (WRTPLV) are Cytoplasmic-facing. A helical transmembrane segment spans residues 455-475 (LAGLYFVPFFIMEGAYVSAVF). Topologically, residues 476–480 (TKIPE) are extracellular. Residues 481-501 (GGWLPFAVSITLAMIMFGWYY) traverse the membrane as a helical segment. At 502–707 (GRQRKFEYEM…RVEIGMLYKV (206 aa)) the chain is on the cytoplasmic side.

This sequence belongs to the HAK/KUP transporter (TC 2.A.72.3) family.

Its subcellular location is the membrane. Functionally, high-affinity potassium transporter. The chain is Probable potassium transporter 17 (HAK17) from Oryza sativa subsp. japonica (Rice).